The sequence spans 469 residues: Glutamate--tRNA ligase (469 aa).

The short motif at 11-21 is the 'HIGH' region element; it reads PSPTGFIHLGN. A compositionally biased stretch (basic and acidic residues) spans 114–131; sequence QREAGEKPRYDGTWRPEP. The tract at residues 114 to 139 is disordered; the sequence is QREAGEKPRYDGTWRPEPGKVLPEPP. Residues 243 to 247 carry the 'KMSKS' region motif; it reads KMSKR. K246 provides a ligand contact to ATP.

This sequence belongs to the class-I aminoacyl-tRNA synthetase family. Glutamate--tRNA ligase type 1 subfamily. As to quaternary structure, monomer.

The protein localises to the cytoplasm. The catalysed reaction is tRNA(Glu) + L-glutamate + ATP = L-glutamyl-tRNA(Glu) + AMP + diphosphate. Its function is as follows. Catalyzes the attachment of glutamate to tRNA(Glu) in a two-step reaction: glutamate is first activated by ATP to form Glu-AMP and then transferred to the acceptor end of tRNA(Glu). The sequence is that of Glutamate--tRNA ligase from Paraburkholderia phytofirmans (strain DSM 17436 / LMG 22146 / PsJN) (Burkholderia phytofirmans).